A 204-amino-acid chain; its full sequence is Leucyl/phenylalanyl-tRNA--protein transferase (204 aa).

It belongs to the L/F-transferase family.

Its subcellular location is the cytoplasm. It carries out the reaction N-terminal L-lysyl-[protein] + L-leucyl-tRNA(Leu) = N-terminal L-leucyl-L-lysyl-[protein] + tRNA(Leu) + H(+). The catalysed reaction is N-terminal L-arginyl-[protein] + L-leucyl-tRNA(Leu) = N-terminal L-leucyl-L-arginyl-[protein] + tRNA(Leu) + H(+). The enzyme catalyses L-phenylalanyl-tRNA(Phe) + an N-terminal L-alpha-aminoacyl-[protein] = an N-terminal L-phenylalanyl-L-alpha-aminoacyl-[protein] + tRNA(Phe). In terms of biological role, functions in the N-end rule pathway of protein degradation where it conjugates Leu, Phe and, less efficiently, Met from aminoacyl-tRNAs to the N-termini of proteins containing an N-terminal arginine or lysine. In Rhizobium meliloti (strain 1021) (Ensifer meliloti), this protein is Leucyl/phenylalanyl-tRNA--protein transferase.